The sequence spans 290 residues: Outer dense fiber protein 4 (290 aa).

Ser28 carries the phosphoserine modification. 4 helical membrane passes run 44–64, 132–152, 164–184, and 201–221; these read AQVV…LMVF, ISFI…HLPY, LIGI…LLLF, and IGWS…CGIL. Residues 262-290 are disordered; the sequence is ADILDPTQDDQKPLSSDNIALPPNPDTTD.

The protein localises to the membrane. Functionally, component of the outer dense fibers (ODF) of spermatozoa which could be involved in sperm tail structure, sperm movement and general organization of cellular cytoskeleton. This chain is Outer dense fiber protein 4 (Odf4), found in Rattus norvegicus (Rat).